The sequence spans 231 residues: ATP-dependent dethiobiotin synthetase BioD (231 aa).

13 to 18 (DVGKTV) is a binding site for ATP. Thr-17 provides a ligand contact to Mg(2+). Residue Lys-38 is part of the active site. ATP-binding positions include Asp-55, 116-119 (EGAG), and 176-177 (NR). Residues Asp-55 and Glu-116 each coordinate Mg(2+).

Belongs to the dethiobiotin synthetase family. Homodimer. Mg(2+) is required as a cofactor.

Its subcellular location is the cytoplasm. It catalyses the reaction (7R,8S)-7,8-diammoniononanoate + CO2 + ATP = (4R,5S)-dethiobiotin + ADP + phosphate + 3 H(+). It participates in cofactor biosynthesis; biotin biosynthesis; biotin from 7,8-diaminononanoate: step 1/2. In terms of biological role, catalyzes a mechanistically unusual reaction, the ATP-dependent insertion of CO2 between the N7 and N8 nitrogen atoms of 7,8-diaminopelargonic acid (DAPA, also called 7,8-diammoniononanoate) to form a ureido ring. The chain is ATP-dependent dethiobiotin synthetase BioD from Vibrio cholerae serotype O1 (strain ATCC 39315 / El Tor Inaba N16961).